A 196-amino-acid polypeptide reads, in one-letter code: Imidazoleglycerol-phosphate dehydratase (196 aa).

This sequence belongs to the imidazoleglycerol-phosphate dehydratase family.

Its subcellular location is the cytoplasm. The enzyme catalyses D-erythro-1-(imidazol-4-yl)glycerol 3-phosphate = 3-(imidazol-4-yl)-2-oxopropyl phosphate + H2O. It participates in amino-acid biosynthesis; L-histidine biosynthesis; L-histidine from 5-phospho-alpha-D-ribose 1-diphosphate: step 6/9. This chain is Imidazoleglycerol-phosphate dehydratase, found in Granulibacter bethesdensis (strain ATCC BAA-1260 / CGDNIH1).